Consider the following 209-residue polypeptide: Uracil phosphoribosyltransferase (209 aa).

Residues Arg79, Arg104, and 131-139 (DPMLATGGS) each bind 5-phospho-alpha-D-ribose 1-diphosphate. Uracil is bound by residues Ile194 and 199–201 (GDA). Asp200 provides a ligand contact to 5-phospho-alpha-D-ribose 1-diphosphate.

Belongs to the UPRTase family. Mg(2+) serves as cofactor.

It carries out the reaction UMP + diphosphate = 5-phospho-alpha-D-ribose 1-diphosphate + uracil. The protein operates within pyrimidine metabolism; UMP biosynthesis via salvage pathway; UMP from uracil: step 1/1. Allosterically activated by GTP. Functionally, catalyzes the conversion of uracil and 5-phospho-alpha-D-ribose 1-diphosphate (PRPP) to UMP and diphosphate. This chain is Uracil phosphoribosyltransferase, found in Geobacter sp. (strain M21).